The chain runs to 135 residues: MQHLDIAELVRSALEVSGCDPSLIGGIDSHSTIVLDLFALPSICISVKDDDVWIWAQLGADSMVVLQQRAYEILMTIMEGCHFARGGQLLLGEQNGELTLKALVHPDFLSDGEKFSTALNGFYNYLEVFSRSLMR.

The protein belongs to the SpaK family.

In terms of biological role, involved in a secretory pathway responsible for the surface presentation of determinants needed for the entry of Salmonella species into mammalian cells. This chain is Surface presentation of antigens protein SpaK (spaK), found in Salmonella typhi.